The primary structure comprises 157 residues: Regulatory protein RecX (157 aa).

It belongs to the RecX family.

It is found in the cytoplasm. In terms of biological role, modulates RecA activity. This chain is Regulatory protein RecX, found in Leptothrix cholodnii (strain ATCC 51168 / LMG 8142 / SP-6) (Leptothrix discophora (strain SP-6)).